Reading from the N-terminus, the 380-residue chain is Cytochrome b (380 aa).

Transmembrane regions (helical) follow at residues 33–53 (FGSLLGLCLITQILTGLFLAM), 77–98 (WLIRNIHANGASFFFICIYMHI), 113–133 (WNIGVVLLLLVMMTAFVGYVL), and 178–198 (FFAFHFLLPFIIAAATVIHLL). Residues H83 and H97 each contribute to the heme b site. 2 residues coordinate heme b: H182 and H196. An a ubiquinone-binding site is contributed by H201. Helical transmembrane passes span 226-246 (YKDLLGFVIMLLALTLLALFS), 288-308 (LGGVLALLFSILVLMVVPLLH), 320-340 (ITQFLFWTLVADMIILTWIGG), and 347-367 (FIIIGQIASVLYFALFLVLFP).

It belongs to the cytochrome b family. The cytochrome bc1 complex contains 3 respiratory subunits (MT-CYB, CYC1 and UQCRFS1), 2 core proteins (UQCRC1 and UQCRC2) and probably 6 low-molecular weight proteins. Heme b serves as cofactor.

It is found in the mitochondrion inner membrane. Its function is as follows. Component of the ubiquinol-cytochrome c reductase complex (complex III or cytochrome b-c1 complex) that is part of the mitochondrial respiratory chain. The b-c1 complex mediates electron transfer from ubiquinol to cytochrome c. Contributes to the generation of a proton gradient across the mitochondrial membrane that is then used for ATP synthesis. This Carassius auratus (Goldfish) protein is Cytochrome b (mt-cyb).